The following is a 340-amino-acid chain: Aldose 1-epimerase (340 aa).

Residue Arg77 coordinates substrate. Residue His172 is the Proton donor of the active site. Position 243 (Asp243) interacts with substrate. Glu305 serves as the catalytic Proton acceptor.

The protein belongs to the aldose epimerase family.

It localises to the cytoplasm. It catalyses the reaction alpha-D-glucose = beta-D-glucose. The protein operates within carbohydrate metabolism; hexose metabolism. Its function is as follows. Mutarotase converts alpha-aldose to the beta-anomer. It is active on D-glucose, L-arabinose, D-xylose, D-galactose, maltose and lactose. The polypeptide is Aldose 1-epimerase (galM) (Haemophilus influenzae (strain ATCC 51907 / DSM 11121 / KW20 / Rd)).